Here is a 205-residue protein sequence, read N- to C-terminus: Small ribosomal subunit protein uS4 (205 aa).

Residues 20–44 (WGRPKSPVNRREYGPGQHGQRRKGK) form a disordered region. An S4 RNA-binding domain is found at 94 to 154 (SRLDAIVYRS…ERSKQLLLVL (61 aa)).

This sequence belongs to the universal ribosomal protein uS4 family. As to quaternary structure, part of the 30S ribosomal subunit. Contacts protein S5. The interaction surface between S4 and S5 is involved in control of translational fidelity.

In terms of biological role, one of the primary rRNA binding proteins, it binds directly to 16S rRNA where it nucleates assembly of the body of the 30S subunit. Its function is as follows. With S5 and S12 plays an important role in translational accuracy. This chain is Small ribosomal subunit protein uS4, found in Bartonella bacilliformis (strain ATCC 35685 / KC583 / Herrer 020/F12,63).